The primary structure comprises 532 residues: Mitogen-activated protein kinase kinase mkk1 (532 aa).

In terms of domain architecture, Protein kinase spans 235–505 (IVELGGLGEG…PWKMLEHPWM (271 aa)). Residues 241-249 (LGEGAGGAV) and lysine 264 each bind ATP. Aspartate 362 acts as the Proton acceptor in catalysis.

It belongs to the protein kinase superfamily. STE Ser/Thr protein kinase family. MAP kinase kinase subfamily.

The enzyme catalyses L-seryl-[protein] + ATP = O-phospho-L-seryl-[protein] + ADP + H(+). It carries out the reaction L-threonyl-[protein] + ATP = O-phospho-L-threonyl-[protein] + ADP + H(+). In terms of biological role, mitogen-activated protein kinase kinase, part of the mkh1-mkk1-spm1 MAPK cascade that regulates regulates vegetative growth, conidial formation, colony surface hydrophobicity, osmotic stress, cell wall integrity maintenance, carbon and nitrogen source utilization, chitin distribution, septa formation, and pathogenicity. This is Mitogen-activated protein kinase kinase mkk1 from Cytospora mali (Apple Valsa canker fungus).